A 310-amino-acid polypeptide reads, in one-letter code: tRNA-5-methyluridine(54) 2-sulfurtransferase (310 aa).

The Zn(2+) site is built by Cys-3, Cys-6, Cys-22, and His-25. ATP-binding residues include Ala-53 and Ile-79. 2 residues coordinate [4Fe-4S] cluster: Cys-128 and Cys-131. Residues Cys-128 and Cys-220 are joined by a disulfide bond. The ATP site is built by Lys-135 and Gly-154. Residue Cys-220 coordinates [4Fe-4S] cluster. Cys-272, Cys-275, Cys-284, and Cys-287 together coordinate Zn(2+).

The protein belongs to the TtcA family. TtuA subfamily. In terms of assembly, homodimer. The cofactor is [4Fe-4S] cluster. Mg(2+) is required as a cofactor.

The enzyme catalyses 5-methyluridine(54) in tRNA + hydrogen sulfide + ATP = 5-methyl-2-thiouridine(54) in tRNA + AMP + diphosphate. Its pathway is tRNA modification. Functionally, catalyzes the ATP-dependent 2-thiolation of 5-methyluridine residue at position 54 in the T loop of tRNAs, leading to 5-methyl-2-thiouridine (m(5)s(2)U or s(2)T). This modification allows thermal stabilization of tRNAs in thermophilic microorganisms, and is required for cell growth at high temperatures. Can use free sulfide as sulfur source in vitro, which may be also the sulfur source in vivo. The polypeptide is tRNA-5-methyluridine(54) 2-sulfurtransferase (Pyrococcus horikoshii (strain ATCC 700860 / DSM 12428 / JCM 9974 / NBRC 100139 / OT-3)).